The sequence spans 138 residues: Putative pre-16S rRNA nuclease (138 aa).

This sequence belongs to the YqgF nuclease family.

It localises to the cytoplasm. Could be a nuclease involved in processing of the 5'-end of pre-16S rRNA. The sequence is that of Putative pre-16S rRNA nuclease from Listeria monocytogenes serotype 4b (strain CLIP80459).